A 506-amino-acid polypeptide reads, in one-letter code: DEAD-box ATP-dependent RNA helicase CshA (506 aa).

The Q motif motif lies at 2 to 30 (QNFKELGISDNTVQSLESMGFKEPTPIQK). Residues 33–203 (IPYALQGIDI…QQFMKSPKII (171 aa)) enclose the Helicase ATP-binding domain. 46-53 (AQTGTGKT) serves as a coordination point for ATP. A DEAD box motif is present at residues 150 to 153 (DEAD). The 162-residue stretch at 214 to 375 (QIEEFYTIVK…LRPPHRKEVL (162 aa)) folds into the Helicase C-terminal domain. A disordered region spans residues 436 to 506 (EKPLSRKGRN…KGRTFADHQK (71 aa)). A compositionally biased stretch (basic residues) spans 468–480 (KRSKGYSSKKKST).

This sequence belongs to the DEAD box helicase family. CshA subfamily. As to quaternary structure, oligomerizes, may be a member of the RNA degradosome.

The protein localises to the cytoplasm. The enzyme catalyses ATP + H2O = ADP + phosphate + H(+). DEAD-box RNA helicase possibly involved in RNA degradation. Unwinds dsRNA in both 5'- and 3'-directions, has RNA-dependent ATPase activity. The protein is DEAD-box ATP-dependent RNA helicase CshA of Staphylococcus aureus (strain bovine RF122 / ET3-1).